The following is a 248-amino-acid chain: Anamorsin homolog (248 aa).

The segment at 4-130 is N-terminal SAM-like domain; it reads FKGLQKSLYI…ETGSSARLSF (127 aa). The linker stretch occupies residues 131 to 161; sequence AKKSPSMNVWKISGDDEELIDEEELLDEEDK. 4 residues coordinate [2Fe-2S] cluster: cysteine 172, cysteine 181, cysteine 184, and cysteine 186. Residues 172–186 form a fe-S binding site A region; the sequence is CSTTGKRKACKNCSC. [4Fe-4S] cluster is bound by residues cysteine 209, cysteine 212, cysteine 220, and cysteine 223. Short sequence motifs (cx2C motif) lie at residues 209-212 and 220-223; these read CGNC and CSTC. Residues 209 to 223 form a fe-S binding site B region; sequence CGNCYLGDAFRCSTC.

This sequence belongs to the anamorsin family. Monomer. It depends on [2Fe-2S] cluster as a cofactor. The cofactor is [4Fe-4S] cluster.

It is found in the cytoplasm. It localises to the mitochondrion intermembrane space. In terms of biological role, component of the cytosolic iron-sulfur (Fe-S) protein assembly (CIA) machinery. Required for the maturation of extramitochondrial Fe-S proteins. Part of an electron transfer chain functioning in an early step of cytosolic Fe-S biogenesis, facilitating the de novo assembly of a [4Fe-4S] cluster on the cytosolic Fe-S scaffold complex. Electrons are transferred from NADPH via a FAD- and FMN-containing diflavin oxidoreductase. Together with the diflavin oxidoreductase, also required for the assembly of the diferric tyrosyl radical cofactor of ribonucleotide reductase (RNR), probably by providing electrons for reduction during radical cofactor maturation in the catalytic small subunit. The chain is Anamorsin homolog from Drosophila mojavensis (Fruit fly).